A 782-amino-acid chain; its full sequence is Nezukol synthase KSL3 (782 aa).

Mg(2+)-binding residues include D529, D533, N677, and E685. Positions 529–533 (DDVFD) match the DDXXD motif motif.

Belongs to the terpene synthase family. It depends on Mg(2+) as a cofactor. Highly expressed in leaves, and, at low levels, in stems, but barely in roots and flowers.

The catalysed reaction is (+)-copalyl diphosphate = miltiradiene + diphosphate. The enzyme catalyses (+)-copalyl diphosphate + H2O = nezukol + diphosphate. It functions in the pathway secondary metabolite biosynthesis; terpenoid biosynthesis. In terms of biological role, involved in the biosynthesis of ent-kaurene diterpenoids natural products such as oridonin, miltiradiene, eriocalyxin B and nezukol, known to exhibit antitumor, anti-inflammatory and antibacterial activities. Catalyzes the conversion of (+)-copalyl diphosphate ((+)-CPP) to nezukol and miltiradiene. The reaction mechanism proceeds via the ionization of the diphosphate group of (+)-CPP, followed by formation of an intermediary pimar-15-en-8-yl(+) carbocation and neutralization of the carbocation by water capture at C-8 to yield nezukol. Can interact with ent-copalyl diphosphate (ent-CPP) but seems unable to use it as substrate. The protein is Nezukol synthase KSL3 of Isodon rubescens (Rabdosia rubescens).